The following is a 69-amino-acid chain: M-poneratoxin-Dq4e (69 aa).

A signal peptide spans 1–25 (MKLSAFTLAFALILMMAIMYNMAEA). Positions 26 to 39 (AALADADADAEAIA) are excised as a propeptide.

In terms of tissue distribution, expressed by the venom gland.

Its subcellular location is the secreted. May have antimicrobial properties, like most ant linear peptides. In addition, when tested in vitro on the parasite Trypanosoma cruzi (responsible of the Chagas disease), is able to moderately reduce the number of the three forms (epimastigote, trypomastigote and amastigote) by inducing cell death through necrosis. The sequence is that of M-poneratoxin-Dq4e from Dinoponera quadriceps (South American ant).